Here is a 753-residue protein sequence, read N- to C-terminus: LIM domain and actin-binding protein 1 (753 aa).

Methionine 1 is subject to N-acetylmethionine. Residue serine 15 is modified to Phosphoserine. The span at 46-56 shows a compositional bias: basic and acidic residues; sequence EEANMERKKNN. Disordered stretches follow at residues 46-66 and 82-186; these read EEANMERKKNNPESLPQHFRR and GAEF…TSGK. Serine 132 is subject to Phosphoserine. The segment covering 143-152 has biased composition (basic and acidic residues); it reads PRSENSHDFK. A Required for interaction with NPC1L1 motif is present at residues 164 to 166; sequence CLG. Residues 167 to 177 show a composition bias toward basic and acidic residues; sequence DSRHEAEKPET. Serine 225, serine 230, serine 242, and serine 263 each carry phosphoserine. Disordered stretches follow at residues 276 to 326 and 341 to 379; these read AAVS…VSTT and TCNSQVKSEAQQPMHPKPLSPDARTSSLPESSPSKTAKK. Positions 278–291 are enriched in polar residues; sequence VSKQSSPASYTNEL. The segment covering 292–305 has biased composition (basic and acidic residues); that stretch reads KTSESKTHKWEQKE. Over residues 342-351 the composition is skewed to polar residues; sequence CNSQVKSEAQ. A phosphoserine mark is found at serine 348, serine 360, serine 367, and serine 372. Positions 363–375 are enriched in polar residues; it reads ARTSSLPESSPSK. The 61-residue stretch at 386–446 folds into the LIM zinc-binding domain; the sequence is ESCVECQKTV…KPHFNQLFKS (61 aa). The residue at position 437 (lysine 437) is an N6-succinyllysine. Residues serine 467, serine 485, and serine 488 each carry the phosphoserine modification. Disordered regions lie at residues 467-493, 505-669, and 682-703; these read SDNEETLGRPAQPPNAGESPHSPGVED, SMEA…FELE, and EDDNHVHAQQSPLEPEAPGWSG. The tract at residues 491 to 511 is required for interaction with MYO5B; sequence VEDAPIAKVGVLAASMEAKAS. Basic and acidic residues-rich tracts occupy residues 512–525 and 554–565; these read SQREREDKPAETKK and WPPEDDVCKTEA. Low complexity predominate over residues 598–609; it reads SSIKSPKASSPS. Phosphoserine is present on residues serine 599, serine 602, serine 607, and serine 615. A compositionally biased stretch (basic and acidic residues) spans 630–666; sequence MERKQTENARPSGEKENVGKSRWQGEEVPRSKDRSSF. Phosphoserine occurs at positions 692, 720, and 735.

As to quaternary structure, interacts with NPC1L1; bridges NPC1L1 with MYO5B. Interacts with MYO5B; bridges MYO5B with NPC1L1. Interacts with PXN; this complex stabilizes actin dynamics. Binds to G-actin and F-actin. Interacts with LUZP1 (via C-terminus); both proteins restrict ciliation and may work together to regulate this process. Binds RAB40B (GTP-bound); interaction influences LIMA1 subcellular localization in lamellipodia during cell migration. Post-translationally, phosphorylation of the C-terminal region by MAPK1/MAPK3 reduces its association with F-actin and contributes to actin filament reorganization and enhances cell motility. In terms of processing, ubiquitinated by the ECS(RAB40B) complex leading to its degradation. Highly expressed in the small intestine, including the duodenum, jejunum, and ileum. Low expression in the liver and very low expressed in the heart, spleen, lung, brain, and pancreas. Isoform Alpha is highly expressed in embryos from day 7-11 and in adult spleen and lung. Isoform Beta expression is highest in adult kidney, testis, lung and liver, intermediate in heart, brain, spleen, skeletal muscle and low in embryos.

The protein localises to the cytoplasm. It is found in the cell junction. It localises to the focal adhesion. Its subcellular location is the cytoskeleton. The protein resides in the stress fiber. The protein localises to the cell membrane. It is found in the cell projection. It localises to the ruffle. Its subcellular location is the lamellipodium. Actin-binding protein involved in actin cytoskeleton regulation and dynamics. Increases the number and size of actin stress fibers and inhibits membrane ruffling. Inhibits actin filament depolymerization. Bundles actin filaments, delays filament nucleation and reduces formation of branched filaments. Acts as a negative regulator of primary cilium formation. Plays a role in cholesterol homeostasis. Influences plasma cholesterol levels through regulation of intestinal cholesterol absorption. May act as a scaffold protein by regulating NPC1L1 transportation, an essential protein for cholesterol absorption, to the plasma membrane by recruiting MYO5B to NPC1L1, and thus facilitates cholesterol uptake. The sequence is that of LIM domain and actin-binding protein 1 (Lima1) from Mus musculus (Mouse).